The sequence spans 466 residues: Muscarinic acetylcholine receptor M2 (466 aa).

Residues 1–22 (MNNSTNSSNNSLALTSPYKTFE) are Extracellular-facing. N-linked (GlcNAc...) asparagine glycans are attached at residues Asn2, Asn3, Asn6, and Asn9. Residues 23–45 (VVFIVLVAGSLSLVTIIGNILVM) form a helical membrane-spanning segment. Residues 46–59 (VSIKVNRHLQTVNN) are Cytoplasmic-facing. A helical membrane pass occupies residues 60 to 80 (YFLFSLACADLIIGVFSMNLY). The Extracellular segment spans residues 81 to 97 (TLYTVIGYWPLGPVVCD). Cys96 and Cys176 are oxidised to a cystine. A helical transmembrane segment spans residues 98–119 (LWLALDYVVSNASVMNLLIISF). The short motif at 120–122 (DRY) is the Important for signaling element. Over 120–139 (DRYFCVTKPLTYPVKRTTKM) the chain is Cytoplasmic. A helical membrane pass occupies residues 140 to 162 (AGMMIAAAWVLSFILWAPAILFW). Residues 163 to 184 (QFIVGVRTVEDGECYIQFFSNA) lie on the Extracellular side of the membrane. Residues 185 to 209 (AVTFGTAIAAFYLPVIIMTVLYWHI) traverse the membrane as a helical segment. Residues 210-387 (SRASKSRIKK…PPSREKKVTR (178 aa)) are Cytoplasmic-facing. The interval 218–355 (KKDKKEPVAN…VVGSSGQNGD (138 aa)) is disordered. Ser232 bears the Phosphoserine mark. The segment covering 254–270 (GLEHNKIQNGKAPRDPV) has biased composition (basic and acidic residues). Polar residues-rich tracts occupy residues 284 to 293 (NDSTSVSAVA), 304 to 313 (DENTVSTSLG), and 334 to 353 (SDSC…SGQN). Residues 388–410 (TILAILLAFIITWAPYNVMVLIN) traverse the membrane as a helical segment. The Extracellular portion of the chain corresponds to 411-418 (TFCAPCIP). A disulfide bridge links Cys413 with Cys416. The chain crosses the membrane as a helical span at residues 419–442 (NTVWTIGYWLCYINSTINPACYAL). Residues 436–440 (NPACY) carry the Important for signaling motif. Residues 443 to 466 (CNATFKKTFKHLLMCHYKNIGATR) are Cytoplasmic-facing. 3 positions are modified to phosphothreonine: Thr446, Thr450, and Thr465.

It belongs to the G-protein coupled receptor 1 family. Muscarinic acetylcholine receptor subfamily. CHRM2 sub-subfamily. As to quaternary structure, interacts with ARRB1 and ARRB2. Interacts with RACK1; the interaction regulates CHRM2 internalization. Post-translationally, phosphorylated in response to agonist treatment.

Its subcellular location is the cell membrane. The protein resides in the postsynaptic cell membrane. Functionally, the muscarinic acetylcholine receptor mediates various cellular responses, including inhibition of adenylate cyclase, breakdown of phosphoinositides and modulation of potassium channels through the action of G proteins. Primary transducing effect is adenylate cyclase inhibition. Signaling promotes phospholipase C activity, leading to the release of inositol trisphosphate (IP3); this then triggers calcium ion release into the cytosol. In Homo sapiens (Human), this protein is Muscarinic acetylcholine receptor M2 (CHRM2).